The primary structure comprises 58 residues: Photosystem II reaction center protein K (58 aa).

A propeptide spanning residues 1-21 is cleaved from the precursor; sequence MLVISNVYPSNLFTLINPFFA. The helical transmembrane segment at 29–49 threads the bilayer; the sequence is IFDPIVDVMPIIPVFFFLLAF.

It belongs to the PsbK family. As to quaternary structure, PSII is composed of 1 copy each of membrane proteins PsbA, PsbB, PsbC, PsbD, PsbE, PsbF, PsbH, PsbI, PsbJ, PsbK, PsbL, PsbM, PsbT, PsbX, PsbY, PsbZ, Psb30/Ycf12, at least 3 peripheral proteins of the oxygen-evolving complex and a large number of cofactors. It forms dimeric complexes.

The protein resides in the plastid. It localises to the chloroplast thylakoid membrane. Its function is as follows. One of the components of the core complex of photosystem II (PSII). PSII is a light-driven water:plastoquinone oxidoreductase that uses light energy to abstract electrons from H(2)O, generating O(2) and a proton gradient subsequently used for ATP formation. It consists of a core antenna complex that captures photons, and an electron transfer chain that converts photonic excitation into a charge separation. This Psilotum nudum (Whisk fern) protein is Photosystem II reaction center protein K.